The sequence spans 509 residues: MADRAALEELVRLQGAHVRGLKEQKASAEQIEEEVTKLLKLKAQLGQDEGKQKFVLKTPKGTRDYSPRQMAVREKVFDVIIRCFKRHGAEVIDTPVFELKETLTGKYGEDSKLIYDLKDQGGELLSLRYDLTVPFARYLAMNKLTNIKRYHIAKVYRRDNPAMTRGRYREFYQCDFDIAGQFDPMIPDAECLKIMCEILSSLQIGNFLVKVNDRRILDGMFAVCGVPDSKFRTICSSVDKLDKVSWEEVKNEMVGEKGLAPEVADRIGDYVQQHGGVSLVEQLLQDPKLSQNKQAVEGLGDLKLLFEYLILFGIDDKISFDLSLARGLDYYTGVIYEAVLLQMPTQAGEEPLGVGSIAAGGRYDGLVGMFDPKGRKVPCVGLSIGVERIFSIVEQRLEASEEKVRTTETQVLVASAQKKLLEERLKLVSELWDAGIKAELLYKKNPKLLNQLQYCEEAGIPLVAIIGEQELKDGVIKLRSVASREEVDVRREDLVEEIRRRTNQPLSTC.

Alanine 2 carries the N-acetylalanine modification. In terms of domain architecture, WHEP-TRS spans 3–59 (DRAALEELVRLQGAHVRGLKEQKASAEQIEEEVTKLLKLKAQLGQDEGKQKFVLKTP). A Phosphoserine modification is found at serine 66. L-histidine is bound by residues 130–132 (DLT), arginine 157, glutamine 173, aspartate 177, arginine 326, and 330–331 (YY). Residue serine 356 is modified to Phosphoserine.

This sequence belongs to the class-II aminoacyl-tRNA synthetase family. As to quaternary structure, homodimer.

The protein localises to the cytoplasm. It catalyses the reaction tRNA(His) + L-histidine + ATP = L-histidyl-tRNA(His) + AMP + diphosphate + H(+). Catalyzes the ATP-dependent ligation of histidine to the 3'-end of its cognate tRNA, via the formation of an aminoacyl-adenylate intermediate (His-AMP). Plays a role in axon guidance. This chain is Histidine--tRNA ligase, cytoplasmic (Hars1), found in Mus musculus (Mouse).